The chain runs to 1021 residues: Collagen alpha-1(I) chain (1021 aa).

The disordered stretch occupies residues 1-1021; sequence DEKSAGGISV…PGPPGPPGPP (1021 aa). Lys3 carries the allysine modification. Residue Ser4 is modified to Phosphoserine. Residues Pro23, Pro26, Pro29, Pro38, Pro41, Pro44, Pro59, Pro74, Pro80, Pro89, and Pro95 each carry the 4-hydroxyproline modification. Positions 31 to 50 are enriched in low complexity; that stretch reads PQGFQGPPGEPGEPGASGPM. The segment covering 62–76 has biased composition (basic and acidic residues); that stretch reads NGDDGEAGKPGRPGE. Lys98 is modified (5-hydroxylysine; alternate). An O-linked (Gal...) hydroxylysine; alternate glycan is attached at Lys98. Residue Ser104 is modified to Phosphoserine. Positions 112–128 are enriched in low complexity; the sequence is DAGPAGPKGEPGSPGEN. A 4-hydroxyproline mark is found at Pro122, Pro125, Pro131, Pro140, Pro146, Pro167, Pro176, Pro179, Pro206, Pro209, Pro221, Pro227, Pro236, Pro242, Pro245, and Pro260. A compositionally biased stretch (low complexity) spans 146–164; that stretch reads PGASGPAGARGNDGATGAA. Over residues 166 to 178 the composition is skewed to pro residues; that stretch reads PPGPTGPAGPPGF. A compositionally biased stretch (low complexity) spans 212–262; the sequence is AGAAGPAGNPGADGQPGAKGANGAPGIAGAPGFPGARGPSGPQGPSGAPGP. A 5-hydroxylysine modification is found at Lys263. 4-hydroxyproline is present on residues Pro269, Pro272, Pro284, Pro293, Pro308, Pro314, Pro323, and Pro329. Residues 318 to 327 show a composition bias toward gly residues; the sequence is GERGGPGSRG. Lys338 bears the 5-hydroxylysine mark. A 4-hydroxyproline mark is found at Pro347, Pro356, Pro362, Pro368, Pro377, Pro380, Pro389, Pro398, Pro404, Pro416, Pro425, Pro434, Pro437, Pro455, Pro472, Pro478, Pro484, Pro490, Pro496, Pro502, Pro514, Pro523, Pro534, Pro546, Pro549, Pro555, Pro561, and Pro570. Residues 371–425 are compositionally biased toward low complexity; the sequence is KGLTGSPGSPGPDGKTGPPGPAGQDGRPGPAGPPGARGQAGVMGFPGPKGAAGEP. Low complexity predominate over residues 484-493; the sequence is PGEAGKPGEQ. A compositionally biased stretch (low complexity) spans 536–558; the sequence is NDGAKGDAGAPGAPGSQGAPGLQ. The residue at position 582 (Lys582) is a 5-hydroxylysine. 4-hydroxyproline is present on residues Pro588 and Pro603. A compositionally biased stretch (low complexity) spans 615 to 629; that stretch reads AGPSGPAGPTGARGA. Position 618 is a phosphoserine (Ser618). 4-hydroxyproline is present on residues Pro630, Pro636, Pro639, Pro648, Pro654, Pro681, and Pro690. Residues 642–672 are compositionally biased toward low complexity; the sequence is AGFAGPPGADGQPGAKGEPGDAGAKGDAGPS. Lys693 carries the post-translational modification 5-hydroxylysine. Positions 698 to 714 are enriched in low complexity; the sequence is SAGPPGATGFPGAAGRV. 2 positions are modified to 4-hydroxyproline: Pro702 and Pro708. The residue at position 716 (Pro716) is a 3-hydroxyproline. Residues Pro717, Pro726, Pro729, Pro750, Pro759, Pro768, Pro777, Pro794, Pro803, Pro806, Pro812, Pro827, Pro833, Pro839, Pro848, and Pro854 each carry the 4-hydroxyproline modification. The segment covering 743 to 752 has biased composition (low complexity); sequence ETGPAGRPGE. Over residues 762-777 the composition is skewed to low complexity; that stretch reads SGEKGSPGADGPAGAP. Residues 826–836 show a composition bias toward pro residues; the sequence is PPGPMGPPGLA. Over residues 838–853 the composition is skewed to low complexity; it reads PPGEAGREGSPGAEGS. Lys863 is modified (5-hydroxylysine). Pro residues predominate over residues 871-886; the sequence is PGPPGAPGAPGAPGPV. Pro874, Pro877, and Pro880 each carry 4-hydroxyproline. Over residues 907 to 921 the composition is skewed to low complexity; it reads AGPAGARGPAGPQGP. A compositionally biased stretch (basic and acidic residues) spans 922–936; it reads RGDKGETGEQGDRGI. Lys925 is modified (5-hydroxylysine). Lys937 is modified (5-hydroxylysine; alternate). O-linked (Gal...) hydroxylysine; alternate glycosylation occurs at Lys937. 4-hydroxyproline occurs at positions 952, 955, 973, and 988. Positions 955–988 are enriched in low complexity; the sequence is PGEQGPSGASGPAGPRGPPGSAGTPGKDGLNGLP. Pro993 is subject to 3-hydroxyproline. A 4-hydroxyproline modification is found at Pro994. Residues 1006 to 1021 are compositionally biased toward pro residues; it reads VGPPGPPGPPGPPGPP. The residue at position 1008 (Pro1008) is a 3-hydroxyproline. Residue Pro1009 is modified to 4-hydroxyproline. Pro1011 is modified (3-hydroxyproline). Position 1012 is a 4-hydroxyproline (Pro1012). Position 1014 is a 3-hydroxyproline (Pro1014). Pro1015, Pro1018, and Pro1021 each carry 4-hydroxyproline.

Belongs to the fibrillar collagen family. As to quaternary structure, trimers of one alpha 2(I) and two alpha 1(I) chains. Post-translationally, contains mostly 4-hydroxyproline. Proline residues at the third position of the tripeptide repeating unit (G-X-Y) are hydroxylated in some or all of the chains. In terms of processing, contains 3-hydroxyproline at a few sites. This modification occurs on the first proline residue in the sequence motif Gly-Pro-Hyp, where Hyp is 4-hydroxyproline. Lysine residues at the third position of the tripeptide repeating unit (G-X-Y) are 5-hydroxylated in some or all of the chains. Post-translationally, O-glycosylated on hydroxylated lysine residues. The O-linked glycan consists of a Glc-Gal disaccharide. In terms of tissue distribution, expressed in bones.

The protein resides in the secreted. It is found in the extracellular space. The protein localises to the extracellular matrix. In terms of biological role, type I collagen is a member of group I collagen (fibrillar forming collagen). The sequence is that of Collagen alpha-1(I) chain from Doedicurus sp. (South American giant glyptodont).